Reading from the N-terminus, the 382-residue chain is MGAFLDKPKMEKHNAQGQGNGLRYGLSSMQGWRVEMEDAHTAVIGLPSGLETWSFFAVYDGHAGSQVAKYCCEHLLDHITNNQDFRGSAGAPSVENVKNGIRTGFLEIDEHMRVMSEKKHGADRSGSTAVGVLISPQHTYFINCGDSRGLLCRNRKVHFFTQDHKPSNPLEKERIQNAGGSVMIQRVNGSLAVSRALGDFDYKCVHGKGPTEQLVSPEPEVHDIERSEEDDQFIILACDGIWDVMGNEELCDFVRSRLEVTDDLEKVCNEVVDTCLYKGSRDNMSVILICFPSAPKVSAEAVKKEAELDKYLESRVEEIIKKQVEGVPDLVHVMRTLASENIPSLPPGGELASKRNVIEAVYNRLNPYKNDDTDSASTDDMW.

G2 carries N-myristoyl glycine lipidation. The region spanning 23–291 (RYGLSSMQGW…DNMSVILICF (269 aa)) is the PPM-type phosphatase domain. The Mn(2+) site is built by D60, G61, D239, and D282. 2 positions are modified to phosphoserine: S375 and S377.

Belongs to the PP2C family. As to quaternary structure, monomer. Interacts with SMAD2; the interaction dephosphorylates SMAD2 in its C-terminal SXS motif resulting in disruption of the SMAD2/SMAD4 complex, SMAD2 nuclear export and termination of the TGF-beta-mediated signaling. Interacts with SMAD2; the interaction dephosphorylates SMAD2 in its C-terminal SXS motif resulting in disruption of the SMAD2/SMAD4 complex, SMAD2 nuclear export and termination of the TGF-beta-mediated signaling. Interacts with the phosphorylated form of IKBKB/IKKB. Mg(2+) serves as cofactor. Mn(2+) is required as a cofactor. In terms of processing, N-myristoylation is essential for the recognition of its substrates for dephosphorylation.

Its subcellular location is the nucleus. It localises to the cytoplasm. The protein resides in the cytosol. The protein localises to the membrane. It catalyses the reaction O-phospho-L-seryl-[protein] + H2O = L-seryl-[protein] + phosphate. The enzyme catalyses O-phospho-L-threonyl-[protein] + H2O = L-threonyl-[protein] + phosphate. Its function is as follows. Enzyme with a broad specificity. Negatively regulates TGF-beta signaling through dephosphorylating SMAD2 and SMAD3, resulting in their dissociation from SMAD4, nuclear export of the SMADs and termination of the TGF-beta-mediated signaling. Dephosphorylates PRKAA1 and PRKAA2. Plays an important role in the termination of TNF-alpha-mediated NF-kappa-B activation through dephosphorylating and inactivating IKBKB/IKKB. The protein is Protein phosphatase 1A (Ppm1a) of Mus musculus (Mouse).